Here is a 204-residue protein sequence, read N- to C-terminus: MFDIGFSELLLIFIVGLVVLGPKRLPVAIRTVMGWVRTIRGLAANVQNELAQELKLQELQESIKKAENLNLKNLSPDLAKTVEELKASAEKMKADLDKAAAETNTTIDEQIQILREENAQTQSNDVATSDTVEKSIADEFSIKNDENPTALSSVVSSVDSIQNGQSDLELDAQAEVDRQLAAMMDKYAPPDDVAENPISTEKTS.

Residues M1 to G21 traverse the membrane as a helical segment. Residues V154–S166 show a composition bias toward polar residues. A disordered region spans residues V154 to S204.

Belongs to the TatB family. The Tat system comprises two distinct complexes: a TatABC complex, containing multiple copies of TatA, TatB and TatC subunits, and a separate TatA complex, containing only TatA subunits. Substrates initially bind to the TatABC complex, which probably triggers association of the separate TatA complex to form the active translocon.

The protein localises to the cell inner membrane. Functionally, part of the twin-arginine translocation (Tat) system that transports large folded proteins containing a characteristic twin-arginine motif in their signal peptide across membranes. Together with TatC, TatB is part of a receptor directly interacting with Tat signal peptides. TatB may form an oligomeric binding site that transiently accommodates folded Tat precursor proteins before their translocation. This chain is Sec-independent protein translocase protein TatB, found in Mannheimia succiniciproducens (strain KCTC 0769BP / MBEL55E).